A 264-amino-acid polypeptide reads, in one-letter code: Thymidylate synthase (264 aa).

Arg-21 is a dUMP binding site. Position 51 (His-51) interacts with (6R)-5,10-methylene-5,6,7,8-tetrahydrofolate. Arg-126–Arg-127 is a dUMP binding site. Cys-146 functions as the Nucleophile in the catalytic mechanism. DUMP contacts are provided by residues Arg-166–Asp-169, Asn-177, and His-207–Tyr-209. Asp-169 serves as a coordination point for (6R)-5,10-methylene-5,6,7,8-tetrahydrofolate. Ala-263 is a (6R)-5,10-methylene-5,6,7,8-tetrahydrofolate binding site.

The protein belongs to the thymidylate synthase family. Bacterial-type ThyA subfamily. Homodimer.

It is found in the cytoplasm. It catalyses the reaction dUMP + (6R)-5,10-methylene-5,6,7,8-tetrahydrofolate = 7,8-dihydrofolate + dTMP. It functions in the pathway pyrimidine metabolism; dTTP biosynthesis. Functionally, catalyzes the reductive methylation of 2'-deoxyuridine-5'-monophosphate (dUMP) to 2'-deoxythymidine-5'-monophosphate (dTMP) while utilizing 5,10-methylenetetrahydrofolate (mTHF) as the methyl donor and reductant in the reaction, yielding dihydrofolate (DHF) as a by-product. This enzymatic reaction provides an intracellular de novo source of dTMP, an essential precursor for DNA biosynthesis. This Ruminiclostridium cellulolyticum (strain ATCC 35319 / DSM 5812 / JCM 6584 / H10) (Clostridium cellulolyticum) protein is Thymidylate synthase.